Consider the following 247-residue polypeptide: Cementoblastoma-derived protein 1 (247 aa).

Over residues 1 to 28 (MGTSSTDSQQAGHRRCSTSNTSAENLTC) the composition is skewed to polar residues. Disordered stretches follow at residues 1-52 (MGTS…AGQP) and 147-183 (EENS…EKVK).

Phosphorylated. In terms of processing, N-glycosylated. Expressed by cementoblasts, a subpopulation of periodontal ligament cells and cells located around vessels in periodontium (at protein level).

The protein localises to the cytoplasm. The protein resides in the nucleus. May play a role in development of the periodontium which surrounds and supports the teeth by promoting the differentiation of multi-potent cells from the periodontal ligament into cementoblasts to form the cementum. Binds hydroxyapatite and may promote the biomineralization of the cementum. Also promotes cell proliferation. This Homo sapiens (Human) protein is Cementoblastoma-derived protein 1.